Consider the following 502-residue polypeptide: ATP synthase subunit alpha (502 aa).

The tract at residues 115–137 is disordered; that stretch reads VDGLGPVETTETRPIESPAPGVM. 169–176 contributes to the ATP binding site; it reads GDRQTGKT.

Belongs to the ATPase alpha/beta chains family. F-type ATPases have 2 components, CF(1) - the catalytic core - and CF(0) - the membrane proton channel. CF(1) has five subunits: alpha(3), beta(3), gamma(1), delta(1), epsilon(1). CF(0) has three main subunits: a(1), b(2) and c(9-12). The alpha and beta chains form an alternating ring which encloses part of the gamma chain. CF(1) is attached to CF(0) by a central stalk formed by the gamma and epsilon chains, while a peripheral stalk is formed by the delta and b chains.

It localises to the cell membrane. The enzyme catalyses ATP + H2O + 4 H(+)(in) = ADP + phosphate + 5 H(+)(out). Produces ATP from ADP in the presence of a proton gradient across the membrane. The alpha chain is a regulatory subunit. This is ATP synthase subunit alpha from Geobacillus stearothermophilus (Bacillus stearothermophilus).